The chain runs to 58 residues: Cyclotide trypsin inhibitor TopI1 (58 aa).

The first 23 residues, 1-23 (MKFIIVLLLLTALTLTSIPVIEG), serve as a signal peptide directing secretion. Residues 24-55 (ILKRCKTYDDCKDVCKARKGKCEFGICKCMIK) constitute a cross-link (cyclopeptide (Ile-Lys)). Disulfide bonds link C28–C45, C34–C50, and C38–C52. A Serine amide modification is found at S56.

In terms of processing, this is a cyclic peptide. As to expression, expressed by the venom gland.

Its subcellular location is the secreted. Functionally, first cyclic scorpion trypsin inhibitor (Kd~0.5 nM). Does not inhibit chymotrypsin. The sequence is that of Cyclotide trypsin inhibitor TopI1 from Tityus obscurus (Amazonian scorpion).